We begin with the raw amino-acid sequence, 215 residues long: Adenylate kinase (215 aa).

10 to 15 (GAGKGT) contacts ATP. The segment at 30 to 59 (STGDMFRAAMKNNTELGKKAKSFMDNGDLV) is NMP. Residues T31, R36, 57-59 (DLV), 85-88 (GFPR), and Q92 contribute to the AMP site. Residues 126-163 (GRWICRTCGKTYHEIYNPPKVPGKCDLDGGELYQRDDD) form an LID region. Residue R127 coordinates ATP. Zn(2+)-binding residues include C130 and C133. 136 to 137 (TY) is an ATP binding site. Positions 150 and 153 each coordinate Zn(2+). AMP is bound by residues R160 and R171. Q199 provides a ligand contact to ATP.

Belongs to the adenylate kinase family. As to quaternary structure, monomer.

It localises to the cytoplasm. It carries out the reaction AMP + ATP = 2 ADP. The protein operates within purine metabolism; AMP biosynthesis via salvage pathway; AMP from ADP: step 1/1. Catalyzes the reversible transfer of the terminal phosphate group between ATP and AMP. Plays an important role in cellular energy homeostasis and in adenine nucleotide metabolism. In Listeria monocytogenes serotype 4b (strain CLIP80459), this protein is Adenylate kinase.